The chain runs to 303 residues: ATP phosphoribosyltransferase (303 aa).

It belongs to the ATP phosphoribosyltransferase family. Long subfamily. The cofactor is Mg(2+).

It is found in the cytoplasm. It catalyses the reaction 1-(5-phospho-beta-D-ribosyl)-ATP + diphosphate = 5-phospho-alpha-D-ribose 1-diphosphate + ATP. It functions in the pathway amino-acid biosynthesis; L-histidine biosynthesis; L-histidine from 5-phospho-alpha-D-ribose 1-diphosphate: step 1/9. With respect to regulation, feedback inhibited by histidine. Its function is as follows. Catalyzes the condensation of ATP and 5-phosphoribose 1-diphosphate to form N'-(5'-phosphoribosyl)-ATP (PR-ATP). Has a crucial role in the pathway because the rate of histidine biosynthesis seems to be controlled primarily by regulation of HisG enzymatic activity. This chain is ATP phosphoribosyltransferase, found in Haemophilus influenzae (strain PittEE).